The following is a 300-amino-acid chain: F-box protein SKIP1 (300 aa).

The F-box; degenerate domain occupies 11–52 (LAPEILINIISRLTIQELWTGPMFVQKSWLTVCRDPYLWSIF).

Part of a SCF (ASK-cullin-F-box) protein ligase complex. Interacts with SKP1A/ASK1 and SKP1B/ASK2.

Its subcellular location is the nucleus. It functions in the pathway protein modification; protein ubiquitination. In terms of biological role, component of SCF(ASK-cullin-F-box) E3 ubiquitin ligase complexes, which may mediate the ubiquitination and subsequent proteasomal degradation of target proteins. In Arabidopsis thaliana (Mouse-ear cress), this protein is F-box protein SKIP1 (SKIP1).